Here is a 249-residue protein sequence, read N- to C-terminus: MIEIESRELADIPVLHAYPVGQKDTPLPCVIFYHGFTSSSLVYSYFAVALAQAGLRVIMPDAPDHGSRFSGDAARRLNQFWQILLQSMQEFTTLRAAIAEENWLLDDRLAVGGASMGAMTALGITARHPTVRCTASMMGSGYFTSLARSLFPPLIPETAAQQNEFNNIVAPLAEWEATNHLEQLSDRPLLLWHGLDDDVVPADESLRLQQALSETGRDKLLTCSWQPGVRHRITPEALDAAVTFFRQHL.

Its function is as follows. Displays esterase activity toward palmitoyl-CoA and pNP-butyrate. The polypeptide is Esterase YjfP (yjfP) (Escherichia coli (strain K12)).